We begin with the raw amino-acid sequence, 470 residues long: Argininosuccinate lyase (470 aa).

The protein belongs to the lyase 1 family. Argininosuccinate lyase subfamily.

It localises to the cytoplasm. It carries out the reaction 2-(N(omega)-L-arginino)succinate = fumarate + L-arginine. It functions in the pathway amino-acid biosynthesis; L-arginine biosynthesis; L-arginine from L-ornithine and carbamoyl phosphate: step 3/3. This is Argininosuccinate lyase from Mycobacterium leprae (strain Br4923).